The chain runs to 133 residues: Sigma factor-binding protein Crl (133 aa).

Residues 99–122 (TLDDFYVKLTKFVKEDCQLDLQAS) form an essential for activity region.

This sequence belongs to the Crl family.

Its subcellular location is the cytoplasm. Its function is as follows. Binds to the sigma-S subunit of RNA polymerase, activating expression of sigma-S-regulated genes. Stimulates RNA polymerase holoenzyme formation and may bind to several other sigma factors, such as sigma-70 and sigma-32. The polypeptide is Sigma factor-binding protein Crl (Photobacterium profundum (strain SS9)).